The chain runs to 55 residues: MINLAVVFLIIAVIAALLGVTGVAGMAAEMAWILFVIGIVLAIVFWVLGRRPPPM.

Helical transmembrane passes span 4 to 24 and 28 to 48; these read LAVV…TGVA and AEMA…FWVL.

This sequence belongs to the UPF0391 family.

The protein localises to the cell membrane. The protein is UPF0391 membrane protein Neut_2351/Neut_2360 of Nitrosomonas eutropha (strain DSM 101675 / C91 / Nm57).